Consider the following 486-residue polypeptide: Malonate-semialdehyde dehydrogenase (486 aa).

Positions 154, 178, 181, 182, and 231 each coordinate NAD(+). Catalysis depends on Cys-286, which acts as the Nucleophile. Glu-386 contacts NAD(+).

This sequence belongs to the aldehyde dehydrogenase family. IolA subfamily. As to quaternary structure, homotetramer.

The catalysed reaction is 3-oxopropanoate + NAD(+) + CoA + H2O = hydrogencarbonate + acetyl-CoA + NADH + H(+). It carries out the reaction 2-methyl-3-oxopropanoate + NAD(+) + CoA + H2O = propanoyl-CoA + hydrogencarbonate + NADH + H(+). The protein operates within polyol metabolism; myo-inositol degradation into acetyl-CoA; acetyl-CoA from myo-inositol: step 7/7. In terms of biological role, catalyzes the oxidation of malonate semialdehyde (MSA) and methylmalonate semialdehyde (MMSA) into acetyl-CoA and propanoyl-CoA, respectively. Is involved in a myo-inositol catabolic pathway. Bicarbonate, and not CO2, is the end-product of the enzymatic reaction. This is Malonate-semialdehyde dehydrogenase from Bacillus pumilus (strain SAFR-032).